A 410-amino-acid polypeptide reads, in one-letter code: Class E basic helix-loop-helix protein 41 (410 aa).

Lys31 is covalently cross-linked (Glycyl lysine isopeptide (Lys-Gly) (interchain with G-Cter in SUMO2)). In terms of domain architecture, bHLH spans 44-99 (TYKLPHRLIEKKRRDRINECIAQLKDLLPEHLKLTTLGHLEKAVVLELTLKHLKAL). Residue Lys121 forms a Glycyl lysine isopeptide (Lys-Gly) (interchain with G-Cter in SUMO2) linkage. An Orange domain is found at 131 to 166 (FHSGFQTCAKEVLQYLARFESWTPREPRCAQLVSHL). 2 disordered regions span residues 209–251 (IQRT…SAAP) and 371–410 (EVAPPGSLRPQHAHSRTHLPHAVNPESSQEDATQPAKDAP). A Glycyl lysine isopeptide (Lys-Gly) (interchain with G-Cter in SUMO2) cross-link involves residue Lys240.

In terms of assembly, homodimer. Heterodimer with BHLHE40/DEC1. Interacts with CIART. Interacts with BMAL1 and RXRA. Interacts with NR0B2 and HNF1A. In terms of tissue distribution, highly expressed in the caudate putamen, pineal gland, granular cell layer of the cerebellum, olfactory bulb, piriform cortex, hippocampus and hypothalamic nuclei. Moderately expressed in skeletal muscle, heart. Weakly expressed in lung.

The protein localises to the nucleus. Functionally, transcriptional repressor involved in the regulation of the circadian rhythm by negatively regulating the activity of the clock genes and clock-controlled genes. Acts as the negative limb of a novel autoregulatory feedback loop (DEC loop) which differs from the one formed by the PER and CRY transcriptional repressors (PER/CRY loop). Both these loops are interlocked as it represses the expression of PER1 and in turn is repressed by PER1/2 and CRY1/2. Represses the activity of the circadian transcriptional activator: CLOCK-BMAL1 heterodimer by competing for the binding to E-box elements (5'-CACGTG-3') found within the promoters of its target genes. Negatively regulates its own expression and the expression of DBP and BHLHE41/DEC2. Acts as a corepressor of RXR and the RXR-LXR heterodimers and represses the ligand-induced RXRA/B/G, NR1H3/LXRA, NR1H4 and VDR transactivation activity. Inhibits HNF1A-mediated transactivation of CYP1A2, CYP2E1 and CYP3A11. The polypeptide is Class E basic helix-loop-helix protein 41 (Bhlhb3) (Rattus norvegicus (Rat)).